An 83-amino-acid chain; its full sequence is Putative defensin-like protein 66 (83 aa).

An N-terminal signal peptide occupies residues 1 to 22; sequence MGSSRLMITFIVVAMLAISSDL. Intrachain disulfides connect C38–C82, C42–C65, C51–C80, and C55–C81.

This sequence belongs to the DEFL family.

The protein resides in the secreted. This Arabidopsis thaliana (Mouse-ear cress) protein is Putative defensin-like protein 66.